Reading from the N-terminus, the 360-residue chain is uncharacterized protein (360 aa).

One can recognise an ABC transporter domain in the interval 4–235 (LSLQHIQKIY…PANMFVAGFI (232 aa)). 37 to 44 (GPSGCGKS) is a binding site for ATP.

The protein belongs to the ABC transporter superfamily.

This is an uncharacterized protein from Escherichia coli O6:K15:H31 (strain 536 / UPEC).